Here is a 452-residue protein sequence, read N- to C-terminus: Cobyrinate a,c-diamide synthase (452 aa).

One can recognise a GATase cobBQ-type domain in the interval 244-429; sequence RIAVARDRAF…LHLHWGTQAW (186 aa). The active-site Nucleophile is C325.

Belongs to the CobB/CbiA family. The cofactor is Mg(2+).

The enzyme catalyses cob(II)yrinate + 2 L-glutamine + 2 ATP + 2 H2O = cob(II)yrinate a,c diamide + 2 L-glutamate + 2 ADP + 2 phosphate + 2 H(+). It functions in the pathway cofactor biosynthesis; adenosylcobalamin biosynthesis; cob(II)yrinate a,c-diamide from sirohydrochlorin (anaerobic route): step 10/10. Catalyzes the ATP-dependent amidation of the two carboxylate groups at positions a and c of cobyrinate, using either L-glutamine or ammonia as the nitrogen source. The protein is Cobyrinate a,c-diamide synthase of Gloeobacter violaceus (strain ATCC 29082 / PCC 7421).